We begin with the raw amino-acid sequence, 196 residues long: NADH-quinone oxidoreductase subunit C (196 aa).

The protein belongs to the complex I 30 kDa subunit family. As to quaternary structure, NDH-1 is composed of 14 different subunits. Subunits NuoB, C, D, E, F, and G constitute the peripheral sector of the complex.

It is found in the cell inner membrane. It catalyses the reaction a quinone + NADH + 5 H(+)(in) = a quinol + NAD(+) + 4 H(+)(out). Functionally, NDH-1 shuttles electrons from NADH, via FMN and iron-sulfur (Fe-S) centers, to quinones in the respiratory chain. The immediate electron acceptor for the enzyme in this species is believed to be ubiquinone. Couples the redox reaction to proton translocation (for every two electrons transferred, four hydrogen ions are translocated across the cytoplasmic membrane), and thus conserves the redox energy in a proton gradient. This chain is NADH-quinone oxidoreductase subunit C, found in Rickettsia bellii (strain RML369-C).